A 272-amino-acid chain; its full sequence is Thymidine phosphorylase (272 aa).

The protein belongs to the thymidine/pyrimidine-nucleoside phosphorylase family. As to quaternary structure, homodimer.

It carries out the reaction thymidine + phosphate = 2-deoxy-alpha-D-ribose 1-phosphate + thymine. In terms of biological role, the enzymes which catalyze the reversible phosphorolysis of pyrimidine nucleosides are involved in the degradation of these compounds and in their utilization as carbon and energy sources, or in the rescue of pyrimidine bases for nucleotide synthesis. The polypeptide is Thymidine phosphorylase (deoA) (Metamycoplasma hominis (Mycoplasma hominis)).